A 330-amino-acid chain; its full sequence is Phenylalanine--tRNA ligase alpha subunit (330 aa).

Residue E246 coordinates Mg(2+).

The protein belongs to the class-II aminoacyl-tRNA synthetase family. Phe-tRNA synthetase alpha subunit type 1 subfamily. Tetramer of two alpha and two beta subunits. Mg(2+) is required as a cofactor.

The protein resides in the cytoplasm. It carries out the reaction tRNA(Phe) + L-phenylalanine + ATP = L-phenylalanyl-tRNA(Phe) + AMP + diphosphate + H(+). The sequence is that of Phenylalanine--tRNA ligase alpha subunit from Campylobacter jejuni subsp. jejuni serotype O:6 (strain 81116 / NCTC 11828).